The sequence spans 94 residues: Integration host factor subunit beta (94 aa).

The protein belongs to the bacterial histone-like protein family. As to quaternary structure, heterodimer of an alpha and a beta chain.

This protein is one of the two subunits of integration host factor, a specific DNA-binding protein that functions in genetic recombination as well as in transcriptional and translational control. This is Integration host factor subunit beta (ihfB) from Serratia marcescens.